The following is a 446-amino-acid chain: 4-aminobutyrate aminotransferase (446 aa).

Position 291 is an N6-(pyridoxal phosphate)lysine (Lys291).

The protein belongs to the class-III pyridoxal-phosphate-dependent aminotransferase family. Pyridoxal 5'-phosphate is required as a cofactor.

The catalysed reaction is 4-aminobutanoate + 2-oxoglutarate = succinate semialdehyde + L-glutamate. It catalyses the reaction (S)-3-amino-2-methylpropanoate + 2-oxoglutarate = 2-methyl-3-oxopropanoate + L-glutamate. The protein operates within amino-acid degradation; 4-aminobutanoate degradation. The polypeptide is 4-aminobutyrate aminotransferase (gabT) (Mycobacterium leprae (strain TN)).